The sequence spans 400 residues: Tryptophan synthase beta chain (400 aa).

Position 91 is an N6-(pyridoxal phosphate)lysine (Lys-91).

The protein belongs to the TrpB family. As to quaternary structure, tetramer of two alpha and two beta chains. Pyridoxal 5'-phosphate serves as cofactor.

The catalysed reaction is (1S,2R)-1-C-(indol-3-yl)glycerol 3-phosphate + L-serine = D-glyceraldehyde 3-phosphate + L-tryptophan + H2O. It functions in the pathway amino-acid biosynthesis; L-tryptophan biosynthesis; L-tryptophan from chorismate: step 5/5. The beta subunit is responsible for the synthesis of L-tryptophan from indole and L-serine. This Listeria monocytogenes serovar 1/2a (strain ATCC BAA-679 / EGD-e) protein is Tryptophan synthase beta chain.